The following is a 214-amino-acid chain: Phosphatidylserine decarboxylase proenzyme (214 aa).

S182 acts as the Schiff-base intermediate with substrate; via pyruvic acid in catalysis. S182 is modified (pyruvic acid (Ser); by autocatalysis).

Belongs to the phosphatidylserine decarboxylase family. PSD-A subfamily. In terms of assembly, heterodimer of a large membrane-associated beta subunit and a small pyruvoyl-containing alpha subunit. The cofactor is pyruvate. Is synthesized initially as an inactive proenzyme. Formation of the active enzyme involves a self-maturation process in which the active site pyruvoyl group is generated from an internal serine residue via an autocatalytic post-translational modification. Two non-identical subunits are generated from the proenzyme in this reaction, and the pyruvate is formed at the N-terminus of the alpha chain, which is derived from the carboxyl end of the proenzyme. The post-translation cleavage follows an unusual pathway, termed non-hydrolytic serinolysis, in which the side chain hydroxyl group of the serine supplies its oxygen atom to form the C-terminus of the beta chain, while the remainder of the serine residue undergoes an oxidative deamination to produce ammonia and the pyruvoyl prosthetic group on the alpha chain.

Its subcellular location is the cell membrane. The catalysed reaction is a 1,2-diacyl-sn-glycero-3-phospho-L-serine + H(+) = a 1,2-diacyl-sn-glycero-3-phosphoethanolamine + CO2. It functions in the pathway phospholipid metabolism; phosphatidylethanolamine biosynthesis; phosphatidylethanolamine from CDP-diacylglycerol: step 2/2. In terms of biological role, catalyzes the formation of phosphatidylethanolamine (PtdEtn) from phosphatidylserine (PtdSer). In Burkholderia multivorans (strain ATCC 17616 / 249), this protein is Phosphatidylserine decarboxylase proenzyme.